The primary structure comprises 74 residues: Conotoxin VxVIA (74 aa).

Positions 1–22 (MKLTCVLIIAVLFLTAYQLATA) are cleaved as a signal peptide. The propeptide occupies 23 to 47 (ASHAKGKQKHRALRPADKHFRFTKR). Disulfide bonds link cysteine 48/cysteine 62, cysteine 55/cysteine 66, and cysteine 61/cysteine 73.

As to expression, expressed by the venom duct.

Its subcellular location is the secreted. When injected intracranially in mice, induces a series of symptoms such as quivering, climbing, scratching, barrel rolling and paralysis of limbs. Unexpectedly, no effect is observed on ionic currents when tested on locust DUM neuron. In Conus vexillum (Flag cone), this protein is Conotoxin VxVIA.